A 438-amino-acid chain; its full sequence is Phosphoribosylamine--glycine ligase (438 aa).

The ATP-grasp domain maps to 108 to 316 (REFMERNDIP…LVEIAEGIVK (209 aa)). 135–194 (IDEYGKPVVVKPLGLTGGKGVKVVGYQLKDNEEAKEYAEYLIKKDGKVLIEERTDGVEFT) is a binding site for ATP. Mg(2+) is bound by residues glutamine 274, glutamate 286, and asparagine 288. Mn(2+)-binding residues include glutamine 274, glutamate 286, and asparagine 288.

This sequence belongs to the GARS family. Mg(2+) is required as a cofactor. The cofactor is Mn(2+).

It catalyses the reaction 5-phospho-beta-D-ribosylamine + glycine + ATP = N(1)-(5-phospho-beta-D-ribosyl)glycinamide + ADP + phosphate + H(+). The protein operates within purine metabolism; IMP biosynthesis via de novo pathway; N(1)-(5-phospho-D-ribosyl)glycinamide from 5-phospho-alpha-D-ribose 1-diphosphate: step 2/2. This is Phosphoribosylamine--glycine ligase from Pyrococcus abyssi (strain GE5 / Orsay).